Here is a 220-residue protein sequence, read N- to C-terminus: Uracil-DNA glycosylase (220 aa).

The Proton acceptor role is filled by Asp-60.

The protein belongs to the uracil-DNA glycosylase (UDG) superfamily. UNG family.

Its subcellular location is the cytoplasm. It catalyses the reaction Hydrolyzes single-stranded DNA or mismatched double-stranded DNA and polynucleotides, releasing free uracil.. In terms of biological role, excises uracil residues from the DNA which can arise as a result of misincorporation of dUMP residues by DNA polymerase or due to deamination of cytosine. This Francisella tularensis subsp. holarctica (strain FTNF002-00 / FTA) protein is Uracil-DNA glycosylase.